A 316-amino-acid chain; its full sequence is Annexin D7 (316 aa).

The residue at position 2 (alanine 2) is an N-acetylalanine. Annexin repeat units follow at residues 11–82 (PLPE…LWTF), 83–154 (EPAE…PLVS), 166–237 (TLAR…AVIK), and 241–312 (YPEK…ALLG). Ca(2+) contacts are provided by phenylalanine 24, glycine 26, glycine 28, and glutamate 68. Serine 95 is subject to Phosphoserine. Phosphothreonine is present on residues threonine 100 and threonine 112. The residue at position 129 (tyrosine 129) is a Phosphotyrosine. Ca(2+)-binding residues include isoleucine 254 and glycine 258. Tyrosine 283 bears the Phosphotyrosine mark. At serine 288 the chain carries Phosphoserine. Ca(2+)-binding residues include aspartate 298, threonine 299, and glutamate 304.

Belongs to the annexin (TC 1.A.31.1) family. In terms of tissue distribution, expressed in flowers.

The chain is Annexin D7 (ANNAT7) from Arabidopsis thaliana (Mouse-ear cress).